The primary structure comprises 179 residues: Large ribosomal subunit protein uL5 (179 aa).

Belongs to the universal ribosomal protein uL5 family. Part of the 50S ribosomal subunit; part of the 5S rRNA/L5/L18/L25 subcomplex. Contacts the 5S rRNA and the P site tRNA. Forms a bridge to the 30S subunit in the 70S ribosome.

Functionally, this is one of the proteins that bind and probably mediate the attachment of the 5S RNA into the large ribosomal subunit, where it forms part of the central protuberance. In the 70S ribosome it contacts protein S13 of the 30S subunit (bridge B1b), connecting the 2 subunits; this bridge is implicated in subunit movement. Contacts the P site tRNA; the 5S rRNA and some of its associated proteins might help stabilize positioning of ribosome-bound tRNAs. The chain is Large ribosomal subunit protein uL5 from Vibrio atlanticus (strain LGP32) (Vibrio splendidus (strain Mel32)).